The primary structure comprises 547 residues: Fimbria adhesin EcpD (547 aa).

The first 20 residues, 1 to 20 (MRVNLLIAMIIFALIWPATA), serve as a signal peptide directing secretion.

This sequence belongs to the EcpD/MatE family. Forms polymers. Interacts with EcpA.

It localises to the fimbrium. Part of the ecpRABCDE operon, which encodes the E.coli common pilus (ECP). ECP is found in both commensal and pathogenic strains and plays a dual role in early-stage biofilm development and host cell recognition. Tip pilus adhesin, which is required for assembly of EcpA into fibers. The polypeptide is Fimbria adhesin EcpD (ecpD) (Escherichia coli O127:H6 (strain E2348/69 / EPEC)).